We begin with the raw amino-acid sequence, 95 residues long: Co-chaperonin GroES (95 aa).

This sequence belongs to the GroES chaperonin family. As to quaternary structure, heptamer of 7 subunits arranged in a ring. Interacts with the chaperonin GroEL.

The protein localises to the cytoplasm. Together with the chaperonin GroEL, plays an essential role in assisting protein folding. The GroEL-GroES system forms a nano-cage that allows encapsulation of the non-native substrate proteins and provides a physical environment optimized to promote and accelerate protein folding. GroES binds to the apical surface of the GroEL ring, thereby capping the opening of the GroEL channel. This is Co-chaperonin GroES from Xylella fastidiosa (strain M12).